We begin with the raw amino-acid sequence, 283 residues long: Probable endonuclease 4 (283 aa).

The Zn(2+) site is built by histidine 69, histidine 109, glutamate 145, aspartate 179, histidine 182, histidine 216, aspartate 229, histidine 231, and glutamate 261.

The protein belongs to the AP endonuclease 2 family. Requires Zn(2+) as cofactor.

It carries out the reaction Endonucleolytic cleavage to 5'-phosphooligonucleotide end-products.. Its function is as follows. Endonuclease IV plays a role in DNA repair. It cleaves phosphodiester bonds at apurinic or apyrimidinic (AP) sites, generating a 3'-hydroxyl group and a 5'-terminal sugar phosphate. The polypeptide is Probable endonuclease 4 (Prosthecochloris aestuarii (strain DSM 271 / SK 413)).